Here is a 122-residue protein sequence, read N- to C-terminus: UPF0102 protein Krad_1407 (122 aa).

This sequence belongs to the UPF0102 family.

The chain is UPF0102 protein Krad_1407 from Kineococcus radiotolerans (strain ATCC BAA-149 / DSM 14245 / SRS30216).